The primary structure comprises 231 residues: Ninja-family protein AFP3 (231 aa).

Residues 83-96 are compositionally biased toward basic residues; sequence AKRKRSEKQRKHKA. The segment at 83–152 is disordered; the sequence is AKRKRSEKQR…SAQSQPENLG (70 aa). Over residues 130–152 the composition is skewed to polar residues; the sequence is QATTNKSVETSPSSAQSQPENLG.

The protein belongs to the Ninja family. Forms a heterodimer with AFP2. Interacts with ABI5/DPBF1, DPBF2, AREB3/DPBF3, EEL/DPBF4, ABF1, ABF3/DPBF5 and ABF4/AREB2.

The protein localises to the nucleus. Acts as a negative regulator of abscisic acid (ABA) response and stress responses. The polypeptide is Ninja-family protein AFP3 (AFP3) (Arabidopsis thaliana (Mouse-ear cress)).